The chain runs to 1062 residues: MPKRKDIHKIMVIGSGPIIIGQAAEFDYSGTQACLALREEGYQVVLVNSNPATIMTDTTIADKVYIEPLTVDSISRIIRQEYPDAILPTLGGQVGLNMALALAKTGILDELNIELLGTKLKSIEQAEDREQFKNLCKELGEPVPPSKTVNTVEAAVEFGDEIGYPIIVRPAFTMGGTGGGICHNRKELAEIAKNGLELSPVTECLIEKSIAGYKEIEFEVMRDHDDNAMIVCCMENFDPVGIHTGDSIVFSPSQTLSDKEYQMLRDCSLKLIRALKIEGGCNVQLALDPNSFDYDVIEVNPRVSRSSALASKATGYPIAKMAAKIAVGMTLDEIKNPVTGTTYAEFEPALDYVVCKIPRWPFDKFQKADRTLGTQMKATGEVMAIGRTAEEAMQKAVRSLEIDEKDLYSEEAHRASDDKLEQKLVKAQDDRLFYLAEAFRRGYSLEDVHELTKINFYFLDIVKHMIEMEKELKENKDEVDILRLAKKYGFSDPTIANLWGETADEVRDFRKAHGIIPVYKMVDTCAAEFESQTPYFYSTYDAENESHRSGKKSVIVIGSGPIRIGQGVEFDYATVHCVKALQKMGYEAIVINSNPETVSTDFSVSDKLYFEPLTLEDVLNVCDLEEPEGVIVQFGGQTSINLAAGLEAHGVKILGTTVKDVNRAEDRKLFDDIIKELKLNQPQGLTATTHEGVIEAAEKLGYPVLVRPSYVLGGKAMEIVYNKKELEEYLQDHVDIAADHPILVDDYLDGRECDVDAISDGYDVLLPGIMEHIEHAGVHSGDSMAVYPPQTFTDEIKEKITEVTKKLALTLNCVGIMNIQFIVRDGEVYVIEVNPRASRTVPFLSKITGIEMAQVATRVIMGESLKEQGYGDGLASEPDMISVKAPVFSFSKLADVDSYLGPEMKSTGEVMGSDHTFAKALYKAFAGAKMQLPENGNVLLTIEDRDKDKILPIAKRFARIGYRIFATKGTADFLKKNDLHVDLVTKVHEDEQADDNILNELRNNKIDLVINTMGHDIEKNSDGFIIRQMAIQQNVPLLTALDTADALLTALENRSFATDALQ.

Residues 1-401 form a carboxyphosphate synthetic domain region; sequence MPKRKDIHKI…AMQKAVRSLE (401 aa). The ATP site is built by Arg-129, Arg-169, Gly-175, Gly-176, Lys-208, Ile-210, Glu-215, Gly-241, Ile-242, His-243, Gln-284, and Glu-298. One can recognise an ATP-grasp 1 domain in the interval 133-327; sequence KNLCKELGEP…IAKMAAKIAV (195 aa). Mg(2+) contacts are provided by Gln-284, Glu-298, and Asn-300. Gln-284, Glu-298, and Asn-300 together coordinate Mn(2+). The interval 402–546 is oligomerization domain; sequence IDEKDLYSEE…YSTYDAENES (145 aa). The carbamoyl phosphate synthetic domain stretch occupies residues 547-929; sequence HRSGKKSVIV…ALYKAFAGAK (383 aa). In terms of domain architecture, ATP-grasp 2 spans 671 to 861; that stretch reads DDIIKELKLN…MAQVATRVIM (191 aa). ATP contacts are provided by Arg-707, Asp-746, Leu-748, Glu-752, Gly-777, Val-778, His-779, Ser-780, Gln-820, and Glu-832. Positions 820, 832, and 834 each coordinate Mg(2+). The Mn(2+) site is built by Gln-820, Glu-832, and Asn-834. In terms of domain architecture, MGS-like spans 930-1062; sequence MQLPENGNVL…NRSFATDALQ (133 aa). The allosteric domain stretch occupies residues 930–1062; it reads MQLPENGNVL…NRSFATDALQ (133 aa).

Belongs to the CarB family. In terms of assembly, composed of two chains; the small (or glutamine) chain promotes the hydrolysis of glutamine to ammonia, which is used by the large (or ammonia) chain to synthesize carbamoyl phosphate. Tetramer of heterodimers (alpha,beta)4. Mg(2+) serves as cofactor. It depends on Mn(2+) as a cofactor.

The catalysed reaction is hydrogencarbonate + L-glutamine + 2 ATP + H2O = carbamoyl phosphate + L-glutamate + 2 ADP + phosphate + 2 H(+). The enzyme catalyses hydrogencarbonate + NH4(+) + 2 ATP = carbamoyl phosphate + 2 ADP + phosphate + 2 H(+). The protein operates within amino-acid biosynthesis; L-arginine biosynthesis; carbamoyl phosphate from bicarbonate: step 1/1. Its pathway is pyrimidine metabolism; UMP biosynthesis via de novo pathway; (S)-dihydroorotate from bicarbonate: step 1/3. Large subunit of the glutamine-dependent carbamoyl phosphate synthetase (CPSase). CPSase catalyzes the formation of carbamoyl phosphate from the ammonia moiety of glutamine, carbonate, and phosphate donated by ATP, constituting the first step of 2 biosynthetic pathways, one leading to arginine and/or urea and the other to pyrimidine nucleotides. The large subunit (synthetase) binds the substrates ammonia (free or transferred from glutamine from the small subunit), hydrogencarbonate and ATP and carries out an ATP-coupled ligase reaction, activating hydrogencarbonate by forming carboxy phosphate which reacts with ammonia to form carbamoyl phosphate. The polypeptide is Carbamoyl phosphate synthase large chain (Lactobacillus acidophilus (strain ATCC 700396 / NCK56 / N2 / NCFM)).